The chain runs to 404 residues: Synaptic vesicle membrane protein VAT-1 homolog (404 aa).

Residues 1–55 form a disordered region; that stretch reads MSAEREATEAATVAAAAEARAETGAGEGAPSQPPTVEVASDPQPPPAPEASASAS. Serine 2 carries the N-acetylserine modification. Serine 2 carries the post-translational modification Phosphoserine. Residues 9–24 show a composition bias toward low complexity; it reads EAATVAAAAEARAETG. Phosphoserine occurs at positions 31 and 40.

The protein belongs to the zinc-containing alcohol dehydrogenase family. Quinone oxidoreductase subfamily. Interacts with MFN1 and MFN2. In terms of tissue distribution, ubiquitously expressed.

It localises to the cytoplasm. The protein resides in the mitochondrion outer membrane. Functionally, plays a part in calcium-regulated keratinocyte activation in epidermal repair mechanisms. Has no effect on cell proliferation. Possesses ATPase activity. May negatively regulate mitochondrial fusion. The polypeptide is Synaptic vesicle membrane protein VAT-1 homolog (Vat1) (Rattus norvegicus (Rat)).